Reading from the N-terminus, the 468-residue chain is Cyclin-T1.1 (468 aa).

Positions 336-354 (KERGVEEERRKRERDRMAG) are enriched in basic and acidic residues. A disordered region spans residues 336–468 (KERGVEEERR…DMDLEDGELE (133 aa)). Positions 387-402 (APPPIPPQLNFPPPPI) are enriched in pro residues. Over residues 458 to 468 (SDMDLEDGELE) the composition is skewed to acidic residues.

The protein belongs to the cyclin family. Cyclin C subfamily.

Its function is as follows. Regulatory subunit of the cyclin-dependent kinase pair (CDK9/cyclin T) complex, also called positive transcription elongation factor B (P-TEFb), which is proposed to facilitate the transition from abortive to production elongation by phosphorylating the CTD (carboxy-terminal domain) of the large subunit of RNA polymerase II (RNAP II). The chain is Cyclin-T1.1 from Caenorhabditis elegans.